A 592-amino-acid polypeptide reads, in one-letter code: Arginine--tRNA ligase (592 aa).

The 'HIGH' region signature appears at 131 to 141 (ANPTGPMHVGH).

Belongs to the class-I aminoacyl-tRNA synthetase family. In terms of assembly, monomer.

The protein resides in the cytoplasm. It catalyses the reaction tRNA(Arg) + L-arginine + ATP = L-arginyl-tRNA(Arg) + AMP + diphosphate. This chain is Arginine--tRNA ligase, found in Rhodospirillum rubrum (strain ATCC 11170 / ATH 1.1.1 / DSM 467 / LMG 4362 / NCIMB 8255 / S1).